The primary structure comprises 296 residues: NADH-cytochrome b5 reductase 2 (296 aa).

The chain crosses the membrane as a helical span at residues 2 to 24; the sequence is LVALAAIGVTVLLFLIKALGSGA. Positions 35–147 constitute an FAD-binding FR-type domain; that stretch reads NAKYPLPLIE…RGPNGLLVYK (113 aa). FAD contacts are provided by residues 127-142 and 166-201; these read DSLK…GPNG and VAKH…KCYL.

Belongs to the flavoprotein pyridine nucleotide cytochrome reductase family. The cofactor is FAD.

It is found in the membrane. It catalyses the reaction 2 Fe(III)-[cytochrome b5] + NADH = 2 Fe(II)-[cytochrome b5] + NAD(+) + H(+). Functionally, NADH-cytochrome b5 reductases are involved in desaturation and elongation of fatty acids, cholesterol biosynthesis and drug metabolism. This chain is NADH-cytochrome b5 reductase 2 (cyb5r2), found in Xenopus laevis (African clawed frog).